A 431-amino-acid chain; its full sequence is 5-methylthioadenosine/S-adenosylhomocysteine deaminase (431 aa).

H63 and H65 together coordinate Zn(2+). 3 residues coordinate substrate: E92, R144, and H184. H211 serves as a coordination point for Zn(2+). Residues E214 and D299 each contribute to the substrate site. Residue D299 participates in Zn(2+) binding.

It belongs to the metallo-dependent hydrolases superfamily. MTA/SAH deaminase family. Zn(2+) serves as cofactor.

The enzyme catalyses S-adenosyl-L-homocysteine + H2O + H(+) = S-inosyl-L-homocysteine + NH4(+). It catalyses the reaction S-methyl-5'-thioadenosine + H2O + H(+) = S-methyl-5'-thioinosine + NH4(+). Functionally, catalyzes the deamination of 5-methylthioadenosine and S-adenosyl-L-homocysteine into 5-methylthioinosine and S-inosyl-L-homocysteine, respectively. Is also able to deaminate adenosine. This Thermoanaerobacter pseudethanolicus (strain ATCC 33223 / 39E) (Clostridium thermohydrosulfuricum) protein is 5-methylthioadenosine/S-adenosylhomocysteine deaminase.